The sequence spans 377 residues: Chaperone protein DnaJ (377 aa).

The region spanning 5 to 70 is the J domain; it reads DYYQILGIPK…EKRSAYDQYG (66 aa). Residues 132-210 form a CR-type zinc finger; that stretch reads GIKKEIQIPT…CHGQGRVETY (79 aa). Zn(2+)-binding residues include Cys145, Cys148, Cys162, Cys165, Cys184, Cys187, Cys198, and Cys201. CXXCXGXG motif repeat units follow at residues 145–152, 162–169, 184–191, and 198–205; these read CKTCYGSG, CSTCHGKG, CPTCHGKG, and CNLCHGQG.

Belongs to the DnaJ family. Homodimer. It depends on Zn(2+) as a cofactor.

Its subcellular location is the cytoplasm. Functionally, participates actively in the response to hyperosmotic and heat shock by preventing the aggregation of stress-denatured proteins and by disaggregating proteins, also in an autonomous, DnaK-independent fashion. Unfolded proteins bind initially to DnaJ; upon interaction with the DnaJ-bound protein, DnaK hydrolyzes its bound ATP, resulting in the formation of a stable complex. GrpE releases ADP from DnaK; ATP binding to DnaK triggers the release of the substrate protein, thus completing the reaction cycle. Several rounds of ATP-dependent interactions between DnaJ, DnaK and GrpE are required for fully efficient folding. Also involved, together with DnaK and GrpE, in the DNA replication of plasmids through activation of initiation proteins. This is Chaperone protein DnaJ from Buchnera aphidicola subsp. Acyrthosiphon pisum (strain Tuc7).